We begin with the raw amino-acid sequence, 79 residues long: CDC42 small effector protein 1 (79 aa).

Residues cysteine 10 and cysteine 11 are each lipidated (S-palmitoyl cysteine). The 14-residue stretch at 30 to 43 (IGEPMNFVHLTHIG) folds into the CRIB domain. The segment at 48–79 (GAGDGLAMTGAVQEQMRSKGNRDRPWSNSRAL) is disordered. Residues 63–72 (MRSKGNRDRP) are compositionally biased toward basic and acidic residues.

This sequence belongs to the CDC42SE/SPEC family. Interacts with CDC42 (in GTP-bound form). Interacts weakly with RAC1 and not at all with RHOA.

It is found in the cytoplasm. The protein resides in the cytoskeleton. Its subcellular location is the cell membrane. Functionally, probably involved in the organization of the actin cytoskeleton by acting downstream of CDC42, inducing actin filament assembly. Alters CDC42-induced cell shape changes. In activated T-cells, may play a role in CDC42-mediated F-actin accumulation at the immunological synapse. May play a role in early contractile events in phagocytosis in macrophages. The chain is CDC42 small effector protein 1 (Cdc42se1) from Rattus norvegicus (Rat).